The following is a 532-amino-acid chain: Muscarinic acetylcholine receptor M5 (532 aa).

Residues 1–29 (MEGESYHNETTVNGTPVNHQALERHGLWE) are Extracellular-facing. Asparagine 8 carries an N-linked (GlcNAc...) asparagine glycan. The helical transmembrane segment at 30–53 (VITIAAVTAVVSLMTIVGNVLVMI) threads the bilayer. Residues 54–66 (SFKVNSQLKTVNN) are Cytoplasmic-facing. Residues 67 to 87 (YYLLSLACADLIIGIFSMNLY) traverse the membrane as a helical segment. Topologically, residues 88–104 (TTYILMGRWVLGSLACD) are extracellular. Cysteine 103 and cysteine 183 form a disulfide bridge. A helical membrane pass occupies residues 105–126 (LWLALDYVASNASVMNLLVISF). The Cytoplasmic portion of the chain corresponds to 127–146 (DRYFSITRPLTYRAKRTPKR). The chain crosses the membrane as a helical span at residues 147–169 (AGIMIGLAWLVSFILWAPAILCW). The Extracellular segment spans residues 170–191 (QYLVGKRTVPPDECQIQFLSEP). A helical transmembrane segment spans residues 192-214 (TITFGTAIAAFYIPVSVMTILYC). Topologically, residues 215-443 (RIYRETEKRT…LVKERKAAQT (229 aa)) are cytoplasmic. Positions 265 to 290 (VRNQASWSSSRRSTSTTGKPTQATDL) are disordered. Over residues 270–281 (SWSSSRRSTSTT) the composition is skewed to low complexity. A helical membrane pass occupies residues 444-464 (LSAILLAFIITWTPYNIMVLV). The Extracellular segment spans residues 465–478 (STFCDKCVPVTLWH). The helical transmembrane segment at 479–498 (LGYWLCYVNSTINPICYALC) threads the bilayer. The Cytoplasmic portion of the chain corresponds to 499–532 (NRTFRKTFKLLLLCRWKKKKVEEKLYWQGNSKLP). Residues threonine 501 and threonine 505 each carry the phosphothreonine modification.

The protein belongs to the G-protein coupled receptor 1 family. Muscarinic acetylcholine receptor subfamily. CHRM5 sub-subfamily.

Its subcellular location is the cell membrane. The protein resides in the postsynaptic cell membrane. Its function is as follows. The muscarinic acetylcholine receptor mediates various cellular responses, including inhibition of adenylate cyclase, breakdown of phosphoinositides and modulation of potassium channels through the action of G proteins. Primary transducing effect is Pi turnover. In Mus musculus (Mouse), this protein is Muscarinic acetylcholine receptor M5 (Chrm5).